The sequence spans 1978 residues: Dedicator of cytokinesis protein 4 (1978 aa).

The 62-residue stretch at 6 to 67 folds into the SH3 domain; the sequence is EHEKYGVVIA…PSSYVHLKNA (62 aa). The residue at position 167 (Tyr167) is a Phosphotyrosine. The residue at position 193 (Thr193) is a Phosphothreonine. A C2 DOCK-type domain is found at 401 to 574; sequence RNDLYITVER…ESFWITSFLC (174 aa). The 407-residue stretch at 1199–1605 folds into the DOCKER domain; it reads KTELNKEEMY…FGIQEFPACI (407 aa). Phosphoserine occurs at positions 1608, 1616, 1623, 1627, 1629, and 1640. Disordered stretches follow at residues 1657-1738 and 1751-1978; these read SQAS…IYPT and IGDG…VSQL. The span at 1681–1712 shows a compositional bias: low complexity; it reads PSPSTSSLSSTHSASPNVTSSAPSSARASPLL. Position 1778 is a phosphoserine (Ser1778). Residues 1797–1803 carry the SH3-binding motif; it reads PPVPPRP. Positions 1804 to 1818 are enriched in polar residues; the sequence is TQTASPARHTTSVSP. A compositionally biased stretch (low complexity) spans 1842–1872; that stretch reads SPGLSSNSPVLSGSYSSGISSLSRCSTSETS. Residues 1873–1882 show a composition bias toward polar residues; the sequence is GFENQANEQS. Over residues 1885–1895 the composition is skewed to pro residues; that stretch reads VPVPVPVPVPV. Positions 1953-1966 are enriched in basic and acidic residues; that stretch reads SHLENGTRRTEPGP.

This sequence belongs to the DOCK family. In terms of assembly, interacts with nucleotide-free Rap1; functions as a guanine nucleotide exchange factor (GEF) for Rap1. Interacts (via DOCKER domain) with RAC1; functions as a guanine nucleotide exchange factor (GEF) for RAC1. Interacts with the SH3 domain of CRK. Interacts with FASLG. Interacts with ELMO2 and EPHA2; mediates activation of RAC1 by EPHA2. Interacts with USH1C (via PDZ 1 domain). As to expression, expressed in inner ear (at protein level).

The protein resides in the cell membrane. Its subcellular location is the cytoplasm. It localises to the cytosol. Functions as a guanine nucleotide exchange factor (GEF) that promotes the exchange of GDP to GTP, converting inactive GDP-bound small GTPases into their active GTP-bound form. Involved in regulation of adherens junction between cells. Plays a role in cell migration. Its function is as follows. Has a higher guanine nucleotide exchange factor activity compared to other isoforms. This chain is Dedicator of cytokinesis protein 4 (Dock4), found in Mus musculus (Mouse).